A 315-amino-acid polypeptide reads, in one-letter code: MRMCDRGIQMLITTVGAFAAFSLMTIAVGTDYWLYSRGVCRTKSTSDNETSRKNEEVMTHSGLWRTCCLEGAFRGVCKKIDHFPEDADYEQDTAEYLLRAVRASSVFPILSVTLLFFGGLCVAASEFHRSRHNVILSAGIFFVSAGLSNIIGIIVYISANAGDPGQRDSKKSYSYGWSFYFGAFSFIIAEIVGVVAVHIYIEKHQQLRAKSHSEFLKKSTFARLPPYRYRFRRRSSSRSTEPRSRDLSPISKGFHTIPSTDISMFTLSRDPSKITMGTLLNSDRDHAFLQFHNSTPKEFKESLHNNPANRRTTPV.

The next 4 membrane-spanning stretches (helical) occupy residues 8 to 28 (IQMLITTVGAFAAFSLMTIAV), 104 to 124 (SSVFPILSVTLLFFGGLCVAA), 135 to 155 (ILSAGIFFVSAGLSNIIGIIV), and 181 to 201 (FGAFSFIIAEIVGVVAVHIYI). A Phosphoserine modification is found at Ser248.

This sequence belongs to the PMP-22/EMP/MP20 family. CACNG subfamily. In terms of assembly, the L-type calcium channel is composed of five subunits: alpha-1, alpha-2/delta, beta and gamma. Acts as an auxiliary subunit for AMPA-selective glutamate receptors (AMPARs). Found in a complex with GRIA1, GRIA2, GRIA3, GRIA4, CNIH2, CNIH3, CACNG2, CACNG4, CACNG5, CACNG7 and CACNG8. Interacts with AP4M1 and GRIA1; associates GRIA1 with the adaptor protein complex 4 (AP-4) to target GRIA1 to the somatodendritic compartment of neurons.

The protein localises to the membrane. In terms of biological role, regulates the trafficking to the somatodendritic compartment and gating properties of AMPA-selective glutamate receptors (AMPARs). Promotes their targeting to the cell membrane and synapses and modulates their gating properties by slowing their rates of activation, deactivation and desensitization. Does not show subunit-specific AMPA receptor regulation and regulates all AMPAR subunits. Thought to stabilize the calcium channel in an inactivated (closed) state. This chain is Voltage-dependent calcium channel gamma-3 subunit (CACNG3), found in Homo sapiens (Human).